We begin with the raw amino-acid sequence, 872 residues long: Cyanophycin synthetase (872 aa).

The ATP-grasp domain maps to 224-480 (KTILQDAGVP…VAAPVMDMLF (257 aa)). Residue 495 to 501 (GTNGKTT) participates in ATP binding.

This sequence in the C-terminal section; belongs to the MurCDEF family. In terms of assembly, homodimer.

It catalyses the reaction [L-4-(L-arginin-2-N-yl)aspartate](n) + L-aspartate + ATP = [L-4-(L-arginin-2-N-yl)aspartate](n)-L-aspartate + ADP + phosphate + H(+). The catalysed reaction is [L-4-(L-arginin-2-N-yl)aspartate](n)-L-aspartate + L-arginine + ATP = [L-4-(L-arginin-2-N-yl)aspartate](n+1) + ADP + phosphate + H(+). Catalyzes the ATP-dependent polymerization of arginine and aspartate to multi-L-arginyl-poly-L-aspartic acid (cyanophycin; a water-insoluble reserve polymer). This Crocosphaera subtropica (strain ATCC 51142 / BH68) (Cyanothece sp. (strain ATCC 51142)) protein is Cyanophycin synthetase (cphA).